The chain runs to 122 residues: Small ribosomal subunit protein uS13 (122 aa).

The disordered stretch occupies residues 95–122; the sequence is GLPVRGQRTKTNSRTRKGRRKTVANKKK. The segment covering 101–122 has biased composition (basic residues); the sequence is QRTKTNSRTRKGRRKTVANKKK.

This sequence belongs to the universal ribosomal protein uS13 family. As to quaternary structure, part of the 30S ribosomal subunit. Forms a loose heterodimer with protein S19. Forms two bridges to the 50S subunit in the 70S ribosome.

In terms of biological role, located at the top of the head of the 30S subunit, it contacts several helices of the 16S rRNA. In the 70S ribosome it contacts the 23S rRNA (bridge B1a) and protein L5 of the 50S subunit (bridge B1b), connecting the 2 subunits; these bridges are implicated in subunit movement. Contacts the tRNAs in the A and P-sites. This Protochlamydia amoebophila (strain UWE25) protein is Small ribosomal subunit protein uS13.